We begin with the raw amino-acid sequence, 138 residues long: Large ribosomal subunit protein uL16m (138 aa).

Belongs to the universal ribosomal protein uL16 family.

The protein resides in the mitochondrion. This Chondrus crispus (Carrageen Irish moss) protein is Large ribosomal subunit protein uL16m (RPL16).